The primary structure comprises 82 residues: Small ribosomal subunit protein bS16 (82 aa).

The protein belongs to the bacterial ribosomal protein bS16 family.

This chain is Small ribosomal subunit protein bS16, found in Shewanella sp. (strain MR-4).